The primary structure comprises 275 residues: Mitochondrial fission factor homolog A (275 aa).

Over 1–255 the chain is Cytoplasmic; sequence MAEVNRIHYE…ENKERAKREM (255 aa). Positions 100–171 are disordered; that stretch reads DFLEPEPAAN…PLISPEDSQN (72 aa). Residues 114-130 are compositionally biased toward basic and acidic residues; sequence PREEMKSHFRSRREQCR. Residues 131-142 show a composition bias toward polar residues; that stretch reads SENSTMRRNGQI. Residues 223 to 253 are a coiled coil; the sequence is LTDAASLRRQIIKLNRRLQLLEHENKERAKR. The chain crosses the membrane as a helical; Anchor for type IV membrane protein span at residues 256–273; the sequence is VMYSLTVAFWLVNSWIWL. The Extracellular portion of the chain corresponds to 274–275; it reads RR.

The protein belongs to the Tango11 family.

It is found in the mitochondrion outer membrane. The protein localises to the peroxisome. Plays a role in mitochondrial and peroxisomal fission. Promotes the recruitment and association of the fission mediator dynamin-related protein 1 (DNM1L) to the mitochondrial surface. The chain is Mitochondrial fission factor homolog A from Danio rerio (Zebrafish).